A 603-amino-acid polypeptide reads, in one-letter code: Pyruvate decarboxylase 4 (603 aa).

Substrate is bound by residues Asp65 and His152. The thiamine pyrophosphate binding stretch occupies residues 430-512 (DSWFNCQKLK…FLINNGGYTI (83 aa)). Mg(2+) is bound by residues Asp480, Asn507, and Gly509. Glu513 contributes to the substrate binding site.

This sequence belongs to the TPP enzyme family. In terms of assembly, homotetramer. A metal cation serves as cofactor. It depends on thiamine diphosphate as a cofactor. In terms of tissue distribution, expressed in shoots and at lowe levels in roots, flowers and siliques.

The enzyme catalyses a 2-oxocarboxylate + H(+) = an aldehyde + CO2. This is Pyruvate decarboxylase 4 (PDC4) from Arabidopsis thaliana (Mouse-ear cress).